A 264-amino-acid chain; its full sequence is Gap junction beta-1 protein (264 aa).

The Cytoplasmic portion of the chain corresponds to 1–22; it reads MNWAGLYAILSGVNRHSTSIGR. A helical transmembrane segment spans residues 23-45; the sequence is IWLSVVFIFRIMVLVAAAESVWG. Residues 46–75 lie on the Extracellular side of the membrane; it reads DEKSAFTCNTQQPGCNSVCYDHFFPISHIR. The chain crosses the membrane as a helical span at residues 76–98; that stretch reads LWALQLIIVSTPALLVAMHVAHL. Over 99–130 the chain is Cytoplasmic; sequence QHQEKKELRLSRHVKDQELAEVKKHKVKISGT. Residues 131 to 153 form a helical membrane-spanning segment; it reads LWWTYISSVFFRIIFEAAFMYIF. Residues 154–191 lie on the Extracellular side of the membrane; the sequence is YLIYPGYSMIRLLKCDAYPCPNTVDCFVSRPTEKTIFT. The chain crosses the membrane as a helical span at residues 192 to 214; sequence VFMLVASGVCIVLNVAEVFFLIA. Topologically, residues 215–264 are cytoplasmic; it reads QACTRRARRHRDSGSISKEHQQNEMNLLITGGSIIKRSAGQEKGDHCSTS.

It belongs to the connexin family. Beta-type (group I) subfamily. As to quaternary structure, a connexon is composed of a hexamer of connexins. In terms of tissue distribution, lung, liver, intestines, stomach and kidney.

The protein resides in the cell membrane. Its subcellular location is the cell junction. It is found in the gap junction. In terms of biological role, one gap junction consists of a cluster of closely packed pairs of transmembrane channels, the connexons, through which materials of low MW diffuse from one cell to a neighboring cell. The sequence is that of Gap junction beta-1 protein (gjb1) from Xenopus laevis (African clawed frog).